The following is a 581-amino-acid chain: Invertase (581 aa).

A signal peptide spans 1-22 (MFLKYILASGICLVSLLSSTNA). N-linked (GlcNAc...) asparagine glycans are attached at residues Asn-37, Asn-40, Asn-46, Asn-57, Asn-62, and Asn-79. Residues 94-97 (FMND), Gln-113, and 158-159 (FS) contribute to the substrate site. Residue Asp-97 is part of the active site. Residues Asn-168 and Asn-175 are each glycosylated (N-linked (GlcNAc...) asparagine). Residues 227 to 228 (RD) and Glu-280 each bind substrate. N-linked (GlcNAc...) asparagine glycosylation occurs at Asn-322. Trp-366 provides a ligand contact to substrate. N-linked (GlcNAc...) asparagine glycans are attached at residues Asn-399, Asn-409, Asn-425, Asn-446, Asn-452, Asn-519, and Asn-569.

Belongs to the glycosyl hydrolase 32 family. Glycosylated; contains 67% carbohydrates. This is composed of equimolar amounts of mannose and galactose. There is also a small amount of glucosamine present.

The catalysed reaction is Hydrolysis of terminal non-reducing beta-D-fructofuranoside residues in beta-D-fructofuranosides.. The sequence is that of Invertase (inv1) from Schizosaccharomyces pombe (strain 972 / ATCC 24843) (Fission yeast).